Reading from the N-terminus, the 327-residue chain is Lipoyl synthase (327 aa).

Residues cysteine 72, cysteine 77, cysteine 83, cysteine 98, cysteine 102, cysteine 105, and serine 313 each coordinate [4Fe-4S] cluster. A Radical SAM core domain is found at cysteine 83–leucine 302.

This sequence belongs to the radical SAM superfamily. Lipoyl synthase family. Requires [4Fe-4S] cluster as cofactor.

It localises to the cytoplasm. It carries out the reaction [[Fe-S] cluster scaffold protein carrying a second [4Fe-4S](2+) cluster] + N(6)-octanoyl-L-lysyl-[protein] + 2 oxidized [2Fe-2S]-[ferredoxin] + 2 S-adenosyl-L-methionine + 4 H(+) = [[Fe-S] cluster scaffold protein] + N(6)-[(R)-dihydrolipoyl]-L-lysyl-[protein] + 4 Fe(3+) + 2 hydrogen sulfide + 2 5'-deoxyadenosine + 2 L-methionine + 2 reduced [2Fe-2S]-[ferredoxin]. It participates in protein modification; protein lipoylation via endogenous pathway; protein N(6)-(lipoyl)lysine from octanoyl-[acyl-carrier-protein]: step 2/2. Catalyzes the radical-mediated insertion of two sulfur atoms into the C-6 and C-8 positions of the octanoyl moiety bound to the lipoyl domains of lipoate-dependent enzymes, thereby converting the octanoylated domains into lipoylated derivatives. In Francisella philomiragia subsp. philomiragia (strain ATCC 25017 / CCUG 19701 / FSC 153 / O#319-036), this protein is Lipoyl synthase.